The sequence spans 293 residues: ATP phosphoribosyltransferase (293 aa).

Belongs to the ATP phosphoribosyltransferase family. Long subfamily. It depends on Mg(2+) as a cofactor.

Its subcellular location is the cytoplasm. It catalyses the reaction 1-(5-phospho-beta-D-ribosyl)-ATP + diphosphate = 5-phospho-alpha-D-ribose 1-diphosphate + ATP. Its pathway is amino-acid biosynthesis; L-histidine biosynthesis; L-histidine from 5-phospho-alpha-D-ribose 1-diphosphate: step 1/9. With respect to regulation, feedback inhibited by histidine. Functionally, catalyzes the condensation of ATP and 5-phosphoribose 1-diphosphate to form N'-(5'-phosphoribosyl)-ATP (PR-ATP). Has a crucial role in the pathway because the rate of histidine biosynthesis seems to be controlled primarily by regulation of HisG enzymatic activity. This chain is ATP phosphoribosyltransferase, found in Nitratidesulfovibrio vulgaris (strain ATCC 29579 / DSM 644 / CCUG 34227 / NCIMB 8303 / VKM B-1760 / Hildenborough) (Desulfovibrio vulgaris).